The chain runs to 124 residues: Large ribosomal subunit protein bL19 (124 aa).

It belongs to the bacterial ribosomal protein bL19 family.

This protein is located at the 30S-50S ribosomal subunit interface and may play a role in the structure and function of the aminoacyl-tRNA binding site. In Orientia tsutsugamushi (strain Ikeda) (Rickettsia tsutsugamushi), this protein is Large ribosomal subunit protein bL19.